Here is a 298-residue protein sequence, read N- to C-terminus: UDP-3-O-acyl-N-acetylglucosamine deacetylase (298 aa).

The Zn(2+) site is built by His79, His239, and Asp243. His266 functions as the Proton donor in the catalytic mechanism.

Belongs to the LpxC family. Zn(2+) is required as a cofactor.

The enzyme catalyses a UDP-3-O-[(3R)-3-hydroxyacyl]-N-acetyl-alpha-D-glucosamine + H2O = a UDP-3-O-[(3R)-3-hydroxyacyl]-alpha-D-glucosamine + acetate. The protein operates within glycolipid biosynthesis; lipid IV(A) biosynthesis; lipid IV(A) from (3R)-3-hydroxytetradecanoyl-[acyl-carrier-protein] and UDP-N-acetyl-alpha-D-glucosamine: step 2/6. Its function is as follows. Catalyzes the hydrolysis of UDP-3-O-myristoyl-N-acetylglucosamine to form UDP-3-O-myristoylglucosamine and acetate, the committed step in lipid A biosynthesis. The protein is UDP-3-O-acyl-N-acetylglucosamine deacetylase of Wigglesworthia glossinidia brevipalpis.